The following is a 160-amino-acid chain: Salivary gland broad-spectrum antiviral protein (160 aa).

The chain crosses the membrane as a helical span at residues 17–37 (VALGLYFTVVVFVLFITSVNL). N-linked (GlcNAc...) asparagine glycosylation is found at N62 and N145.

Salivary gland (at protein level).

It localises to the membrane. (Microbial infection) Modulates replication of Zika virus in salivary glands. Functionally, (Microbial infection) Modulates replication of dengue virus type 2 in salivary glands. Its function is as follows. (Microbial infection) Modulates replication of chikungunya virus in salivary glands. The polypeptide is Salivary gland broad-spectrum antiviral protein (Aedes aegypti (Yellowfever mosquito)).